A 487-amino-acid polypeptide reads, in one-letter code: Cyclic AMP-dependent transcription factor ATF-2 (487 aa).

Residues phenylalanine 7–histidine 31 form a C2H2-type zinc finger. Threonine 34 is modified (phosphothreonine; by PKC/PRKCH). Serine 44 bears the Phosphoserine; by VRK1 mark. Threonine 51 and threonine 53 each carry phosphothreonine. A Phosphothreonine; by VRK1 modification is found at threonine 55. A phosphoserine mark is found at serine 72 and serine 94. Position 98 is a phosphothreonine (threonine 98). Serine 103 carries the post-translational modification Phosphoserine; by PKC/PRKCA and PKC/PRKCB. Disordered regions lie at residues glutamate 107–glutamate 130 and proline 241–arginine 355. Residue serine 118 is modified to Phosphoserine. The segment covering leucine 264–aspartate 275 has biased composition (polar residues). An essential for its histone acetyltransferase activity region spans residues lysine 278–glycine 281. The segment covering proline 300–proline 316 has biased composition (low complexity). The residue at position 310 (serine 310) is a Phosphoserine. A Phosphoserine; by PKC/PRKCA and PKC/PRKCB modification is found at serine 322. Residues alanine 328–arginine 345 show a composition bias toward basic and acidic residues. A bZIP domain is found at aspartate 334–histidine 397. The interval lysine 336–lysine 356 is basic motif. Lysine 339 is subject to N6-acetyllysine. Serine 349 carries the post-translational modification Phosphoserine; by PKC/PRKCA and PKC/PRKCB. The residue at position 356 (lysine 356) is an N6-acetyllysine. A leucine-zipper region spans residues leucine 362–leucine 390. Residues valine 387–alanine 396 carry the Nuclear export signal motif. Residues lysine 407–serine 487 form a disordered region. Phosphoserine occurs at positions 424 and 428. Over residues valine 425 to histidine 436 the composition is skewed to polar residues. The segment covering serine 437–serine 449 has biased composition (low complexity). Residues serine 457–alanine 470 are compositionally biased toward polar residues. Serine 472 and serine 480 each carry phosphoserine; by ATM. The segment covering proline 478–serine 487 has biased composition (polar residues).

This sequence belongs to the bZIP family. ATF subfamily. As to quaternary structure, binds DNA as a dimer and can form a homodimer in the absence of DNA. Can form a heterodimer with JUN. Heterodimerization is essential for its transcriptional activity. Interacts with SMAD3 and SMAD4. Binds through its N-terminal region to UTF1 which acts as a coactivator of ATF2 transcriptional activity. Interacts with the HK1/VDAC1 complex. Interacts with NBN, MRE11, XPO1, KAT5 and CUL3. Phosphorylation of Thr-51 by MAPK14 and MAPK11, and at Thr-53 by MAPK1/ERK2, MAPK3/ERK1, MAPK11, MAPK12 and MAPK14 in response to external stimulus like insulin causes increased transcriptional activity. Phosphorylated by PLK3 following hyperosmotic stress. Also phosphorylated and activated by JNK and CaMK4. ATM-mediated phosphorylation at Ser-472 and Ser-480 stimulates its function in DNA damage response. Phosphorylation at Ser-44, Thr-55 and Ser-103 activates its transcriptional activity. Phosphorylation at Thr-51 or Thr-53 enhances acetylation of histones H2B and H4.

It is found in the nucleus. Its subcellular location is the cytoplasm. The protein localises to the mitochondrion outer membrane. In terms of biological role, transcriptional activator which regulates the transcription of various genes, including those involved in anti-apoptosis, cell growth, and DNA damage response. Dependent on its binding partner, binds to CRE (cAMP response element) consensus sequences (5'-TGACGTCA-3') or to AP-1 (activator protein 1) consensus sequences (5'-TGACTCA-3'). In the nucleus, contributes to global transcription and the DNA damage response, in addition to specific transcriptional activities that are related to cell development, proliferation and death. In the cytoplasm, interacts with and perturbs HK1- and VDAC1-containing complexes at the mitochondrial outer membrane, thereby impairing mitochondrial membrane potential, inducing mitochondrial leakage and promoting cell death. The phosphorylated form (mediated by ATM) plays a role in the DNA damage response and is involved in the ionizing radiation (IR)-induced S phase checkpoint control and in the recruitment of the MRN complex into the IR-induced foci (IRIF). Exhibits histone acetyltransferase (HAT) activity which specifically acetylates histones H2B and H4 in vitro. In concert with CUL3 and RBX1, promotes the degradation of KAT5 thereby attenuating its ability to acetylate and activate ATM. Can elicit oncogenic or tumor suppressor activities depending on the tissue or cell type. This chain is Cyclic AMP-dependent transcription factor ATF-2 (Atf2), found in Rattus norvegicus (Rat).